The following is a 306-amino-acid chain: Putative B3 domain-containing protein Os03g0621600 (306 aa).

The TF-B3 1 DNA-binding region spans 29–122; that stretch reads FSVLCLMPIM…QLKTLIFDSS (94 aa). The tract at residues 139–166 is disordered; that stretch reads YDIAMRNSQDEKKKRKQRDISRQGTVKP. A DNA-binding region (TF-B3 2) is located at residues 210–306; that stretch reads GYVMNNSSIH…VMDVHIIRRK (97 aa).

It is found in the nucleus. The chain is Putative B3 domain-containing protein Os03g0621600 from Oryza sativa subsp. japonica (Rice).